The chain runs to 56 residues: Small ribosomal subunit protein uS14 (56 aa).

The protein belongs to the universal ribosomal protein uS14 family. In terms of assembly, component of the small ribosomal subunit (SSU). Mature yeast ribosomes consist of a small (40S) and a large (60S) subunit. The 40S small subunit contains 1 molecule of ribosomal RNA (18S rRNA) and at least 33 different proteins. The large 60S subunit contains 3 rRNA molecules (25S, 5.8S and 5S rRNA) and at least 46 different proteins.

It is found in the cytoplasm. The protein resides in the nucleus. Functionally, component of the ribosome, a large ribonucleoprotein complex responsible for the synthesis of proteins in the cell. The small ribosomal subunit (SSU) binds messenger RNAs (mRNAs) and translates the encoded message by selecting cognate aminoacyl-transfer RNA (tRNA) molecules. The large subunit (LSU) contains the ribosomal catalytic site termed the peptidyl transferase center (PTC), which catalyzes the formation of peptide bonds, thereby polymerizing the amino acids delivered by tRNAs into a polypeptide chain. The nascent polypeptides leave the ribosome through a tunnel in the LSU and interact with protein factors that function in enzymatic processing, targeting, and the membrane insertion of nascent chains at the exit of the ribosomal tunnel. The protein is Small ribosomal subunit protein uS14 (rps29) of Schizosaccharomyces pombe (strain 972 / ATCC 24843) (Fission yeast).